Here is a 292-residue protein sequence, read N- to C-terminus: Protein/nucleic acid deglycase HchA (292 aa).

Residues 1 to 12 (MSQDVNELSKQP) are compositionally biased toward polar residues. A disordered region spans residues 1–23 (MSQDVNELSKQPTPDKAEDNAFF). Residue Cys190 is the Nucleophile of the active site.

Belongs to the peptidase C56 family. HchA subfamily.

Its subcellular location is the cytoplasm. It carries out the reaction N(omega)-(1-hydroxy-2-oxopropyl)-L-arginyl-[protein] + H2O = lactate + L-arginyl-[protein] + H(+). The catalysed reaction is N(6)-(1-hydroxy-2-oxopropyl)-L-lysyl-[protein] + H2O = lactate + L-lysyl-[protein] + H(+). The enzyme catalyses S-(1-hydroxy-2-oxopropyl)-L-cysteinyl-[protein] + H2O = lactate + L-cysteinyl-[protein] + H(+). It catalyses the reaction N(omega)-(1-hydroxy-2-oxoethyl)-L-arginyl-[protein] + H2O = L-arginyl-[protein] + glycolate + H(+). It carries out the reaction N(6)-(1-hydroxy-2-oxoethyl)-L-lysyl-[protein] + H2O = glycolate + L-lysyl-[protein] + H(+). The catalysed reaction is S-(1-hydroxy-2-oxoethyl)-L-cysteinyl-[protein] + H2O = glycolate + L-cysteinyl-[protein] + H(+). The enzyme catalyses N(2)-(1-hydroxy-2-oxopropyl)-dGTP + H2O = lactate + dGTP + H(+). It catalyses the reaction N(2)-(1-hydroxy-2-oxopropyl)-GTP + H2O = lactate + GTP + H(+). It carries out the reaction N(2)-(1-hydroxy-2-oxopropyl)-GDP + H2O = lactate + GDP + H(+). The catalysed reaction is N(2)-(1-hydroxy-2-oxopropyl)-GMP + H2O = lactate + GMP + H(+). The enzyme catalyses N(2)-(1-hydroxy-2-oxoethyl)-dGTP + H2O = dGTP + glycolate + H(+). It catalyses the reaction N(2)-(1-hydroxy-2-oxoethyl)-GTP + H2O = glycolate + GTP + H(+). It carries out the reaction N(2)-(1-hydroxy-2-oxoethyl)-GDP + H2O = glycolate + GDP + H(+). The catalysed reaction is N(2)-(1-hydroxy-2-oxoethyl)-GMP + H2O = glycolate + GMP + H(+). The enzyme catalyses an N(2)-(1-hydroxy-2-oxopropyl)-guanosine in RNA + H2O = a guanosine in RNA + lactate + H(+). It catalyses the reaction an N(2)-(1-hydroxy-2-oxopropyl)-2'-deoxyguanosine in DNA + H2O = a 2'-deoxyguanosine in DNA + lactate + H(+). It carries out the reaction an N(2)-(1-hydroxy-2-oxoethyl)-guanosine in RNA + H2O = a guanosine in RNA + glycolate + H(+). The catalysed reaction is an N(2)-(1-hydroxy-2-oxoethyl)-2'-deoxyguanosine in DNA + H2O = a 2'-deoxyguanosine in DNA + glycolate + H(+). Functionally, protein and nucleotide deglycase that catalyzes the deglycation of the Maillard adducts formed between amino groups of proteins or nucleotides and reactive carbonyl groups of glyoxals. Thus, functions as a protein deglycase that repairs methylglyoxal- and glyoxal-glycated proteins, and releases repaired proteins and lactate or glycolate, respectively. Deglycates cysteine, arginine and lysine residues in proteins, and thus reactivates these proteins by reversing glycation by glyoxals. Acts on early glycation intermediates (hemithioacetals and aminocarbinols), preventing the formation of Schiff bases and advanced glycation endproducts (AGE). Also functions as a nucleotide deglycase able to repair glycated guanine in the free nucleotide pool (GTP, GDP, GMP, dGTP) and in DNA and RNA. Is thus involved in a major nucleotide repair system named guanine glycation repair (GG repair), dedicated to reversing methylglyoxal and glyoxal damage via nucleotide sanitization and direct nucleic acid repair. Plays an important role in protecting cells from carbonyl stress. The chain is Protein/nucleic acid deglycase HchA from Staphylococcus aureus (strain bovine RF122 / ET3-1).